A 183-amino-acid polypeptide reads, in one-letter code: CKLF-like MARVEL transmembrane domain-containing protein 6 (183 aa).

Met1 is subject to N-acetylmethionine. The Cytoplasmic portion of the chain corresponds to 1–39 (MENGAVYSPTTEEDPGPARGPRSGLAAYFFMGRLPLLRR). Position 8 is a phosphoserine (Ser8). In terms of domain architecture, MARVEL spans 33 to 160 (RLPLLRRVLK…DFITMLYEKR (128 aa)). The chain crosses the membrane as a helical span at residues 40 to 60 (VLKGLQLLLSLLAFICEEVVS). Topologically, residues 61-67 (QCTLCGG) are extracellular. A helical transmembrane segment spans residues 68-88 (LYFFEFVSCSAFLLSLLILIV). Residues 89 to 106 (YCTPFYERVDTTKVKSSD) are Cytoplasmic-facing. Residues 107–127 (FYITLGTGCVFLLASIIFVST) form a helical membrane-spanning segment. Over 128–134 (HDRTSAE) the chain is Extracellular. The chain crosses the membrane as a helical span at residues 135-155 (IAAIVFGFIASFMFLLDFITM). The Cytoplasmic segment spans residues 156 to 183 (LYEKRQESQLRKPENTTRAEALTEPLNA). Thr171 carries the phosphothreonine modification.

The protein belongs to the chemokine-like factor family. In terms of assembly, interacts with PD-L1/CD274 (via transmembrane domain); the interaction is direct. Interacts with CMTM4. Interacts with CD58, ARG1, ENO1 and TMPO. As to expression, expressed in the leukocytes, placenta and testis.

It localises to the cell membrane. The protein resides in the early endosome membrane. The protein localises to the recycling endosome membrane. Master regulator of recycling and plasma membrane expression of PD-L1/CD274, an immune inhibitory ligand critical for immune tolerance to self and antitumor immunity. Associates with both constitutive and IFNG-induced PD-L1/CD274 at recycling endosomes, where it protects PD-L1/CD274 from being targeted for lysosomal degradation, likely by preventing its STUB1-mediated ubiquitination. May stabilize PD-L1/CD274 expression on antigen presenting cells and potentiates inhibitory signaling by PDCD1/CD279, its receptor on T-cells, ultimately triggering T-cell anergy. This Homo sapiens (Human) protein is CKLF-like MARVEL transmembrane domain-containing protein 6.